Consider the following 165-residue polypeptide: uncharacterized protein (165 aa).

Belongs to the IIV-6 415R family.

This is an uncharacterized protein from Invertebrate iridescent virus 3 (IIV-3).